The chain runs to 207 residues: Outer-membrane lipoprotein LolB (207 aa).

A signal peptide spans 1-21 (MPMRKRHFYRLLPLASLLLAA). Cys-22 is lipidated: N-palmitoyl cysteine. Cys-22 is lipidated: S-diacylglycerol cysteine.

It belongs to the LolB family. In terms of assembly, monomer.

The protein resides in the cell outer membrane. Its function is as follows. Plays a critical role in the incorporation of lipoproteins in the outer membrane after they are released by the LolA protein. This chain is Outer-membrane lipoprotein LolB, found in Yersinia pseudotuberculosis serotype IB (strain PB1/+).